We begin with the raw amino-acid sequence, 550 residues long: Hydroxylamine reductase (550 aa).

4 residues coordinate [2Fe-2S] cluster: cysteine 3, cysteine 6, cysteine 18, and cysteine 25. Positions 249, 273, 317, 405, 433, 458, 492, and 494 each coordinate hybrid [4Fe-2O-2S] cluster. Cysteine 405 is subject to Cysteine persulfide.

It belongs to the HCP family. It depends on [2Fe-2S] cluster as a cofactor. The cofactor is hybrid [4Fe-2O-2S] cluster.

It is found in the cytoplasm. It catalyses the reaction A + NH4(+) + H2O = hydroxylamine + AH2 + H(+). Inhibited by oxygen. Activated by cyanide except in the prolonged presence of excess cyanide, where the enzyme is inactivated. Functionally, catalyzes the reduction of hydroxylamine to form NH(3) and H(2)O. Is also able to reduce hydroxylamine analogs such as methylhydroxylamine and hydroxyquinone. Might have a role as a scavenger of potentially toxic by-products of nitrate metabolism. The chain is Hydroxylamine reductase from Escherichia coli (strain K12).